The sequence spans 110 residues: Nucleoid-associated protein YpAngola_A2890 (110 aa).

The interval 90-110 (KEKMASVSNGMQLPPGFKMPF) is disordered.

It belongs to the YbaB/EbfC family. Homodimer.

The protein resides in the cytoplasm. It localises to the nucleoid. Binds to DNA and alters its conformation. May be involved in regulation of gene expression, nucleoid organization and DNA protection. This is Nucleoid-associated protein YpAngola_A2890 from Yersinia pestis bv. Antiqua (strain Angola).